The primary structure comprises 1164 residues: Shugoshin 2A (1164 aa).

Residues 62-113 adopt a coiled-coil conformation; that stretch reads LSKEKENSRRITTEKMQLQKEVEKLNFENTFLRLKLNTLNKKLVEIESHVSN. Disordered stretches follow at residues 160 to 269, 287 to 314, 390 to 492, 521 to 541, and 917 to 992; these read SEND…VTMR, HQPT…NTQR, RKVK…PFSR, TFVI…DKDT, and PLDS…ETHG. The span at 182 to 198 shows a compositional bias: low complexity; sequence SKTSPDSTSSVSRQPSS. Polar residues-rich tracts occupy residues 238 to 247 and 288 to 299; these read DQSPKSSLSE and QPTSSPGSNWNN. Residues 390–412 are compositionally biased toward basic and acidic residues; that stretch reads RKVKGASSDKKRESSKRECKDGS. Residues 443–472 show a composition bias toward polar residues; it reads CISSTEQPSQVNTQKKRTLQNSSDQENIQN. Residues 525–541 show a composition bias toward basic and acidic residues; sequence RKSEKDNLFPNQEDKDT. The segment covering 934–948 has biased composition (polar residues); that stretch reads GEQTNLPKMQKQSAG. A Phosphoserine modification is found at S1042. The segment at 1092–1164 is disordered; the sequence is ITTGTRNPHH…EPSLRSKMRR (73 aa). Positions 1112–1125 are enriched in low complexity; sequence TSLVLVDTSSVSDT. Polar residues predominate over residues 1126-1140; that stretch reads NPANPENESEGQSSH.

This sequence belongs to the shugoshin family. As to quaternary structure, part of an astrin (SPAG5)-kinastrin (SKAP) complex containing KNSTRN, SPAG5, PLK1, DYNLL1 and SGO2A. Interacts with CDCA8. Interacts with PPP2CA. Ubiquitously expressed in proliferating cells. Highly expressed in the testis and oocytes.

It is found in the nucleus. It localises to the chromosome. The protein localises to the centromere. The protein resides in the kinetochore. Cooperates with PPP2CA to protect centromeric cohesin from separase-mediated cleavage in oocytes specifically during meiosis I. Has a crucial role in protecting REC8 at centromeres from cleavage by separase. During meiosis, protects centromeric cohesion complexes until metaphase II/anaphase II transition, preventing premature release of meiosis-specific REC8 cohesin complexes from anaphase I centromeres. Is thus essential for an accurate gametogenesis. May act by targeting PPP2CA to centromeres, thus leading to cohesin dephosphorylation. Essential for recruiting KIF2C to the inner centromere and for correcting defective kinetochore attachments. Involved in centromeric enrichment of AUKRB in prometaphase. This is Shugoshin 2A from Mus musculus (Mouse).